Here is a 105-residue protein sequence, read N- to C-terminus: Replication restart protein PriB (105 aa).

One can recognise an SSB domain in the interval 1–102; it reads MTANRLVLTG…LHAEQIELID (102 aa).

Belongs to the PriB family. In terms of assembly, homodimer. Interacts with PriA and DnaT. Component of the replication restart primosome. Primosome assembly occurs via a 'hand-off' mechanism. PriA binds to replication forks, subsequently PriB then DnaT bind; DnaT then displaces ssDNA to generate the helicase loading substrate.

Functionally, involved in the restart of stalled replication forks, which reloads the replicative helicase on sites other than the origin of replication; the PriA-PriB pathway is the major replication restart pathway. During primosome assembly it facilitates complex formation between PriA and DnaT on DNA; stabilizes PriA on DNA. Stimulates the DNA unwinding activity of PriA helicase. The polypeptide is Replication restart protein PriB (Proteus mirabilis (strain HI4320)).